We begin with the raw amino-acid sequence, 330 residues long: Carbonic anhydrase (330 aa).

The tract at residues 1–109 (MSTASAFATN…AAARIDQITA (109 aa)) is chloroplast transit peptide-like.

The protein belongs to the beta-class carbonic anhydrase family.

It is found in the cytoplasm. The enzyme catalyses hydrogencarbonate + H(+) = CO2 + H2O. Its function is as follows. Reversible hydration of carbon dioxide. The sequence is that of Carbonic anhydrase from Flaveria brownii (Brown's yellowtops).